Here is a 747-residue protein sequence, read N- to C-terminus: Protein MTSS 2 (747 aa).

Residues 1–252 enclose the IMD domain; sequence METAEKECGA…EQVIKDLKGS (252 aa). Residues 135–159 adopt a coiled-coil conformation; it reads EIKKKSSDTLKLQKKARKELLGKGD. Low complexity-rich tracts occupy residues 256–284, 321–332, and 349–367; these read WSYQ…SSSS, SSVSSHDSGFVS, and TSQK…TCQS. Disordered regions lie at residues 256-302, 318-441, 457-522, and 543-599; these read WSYQ…YSPS, ARLS…EEVS, LEHQ…RNSN, and PTAG…PTVP. Residue Thr-260 is modified to Phosphothreonine. The residue at position 264 (Ser-264) is a Phosphoserine. The span at 368–378 shows a compositional bias: polar residues; it reads VSECSSPTSDW. Residues 397 to 406 show a composition bias toward basic and acidic residues; it reads DRVELLRDTE. Position 441 is a phosphoserine (Ser-441). A compositionally biased stretch (low complexity) spans 466–479; that stretch reads SLQYSSGYSTQTTT. The span at 480–492 shows a compositional bias: polar residues; it reads PSCSEDTIPSQGS. 6 positions are modified to phosphoserine: Ser-579, Ser-601, Ser-612, Ser-624, Ser-634, and Ser-639. Disordered stretches follow at residues 638 to 664 and 691 to 720; these read LSLP…EDEQ and GQFP…DPPA. Residue Thr-643 is modified to Phosphothreonine. Composition is skewed to low complexity over residues 646 to 659 and 696 to 707; these read GSPS…PGAG and PTALSATPTEET. Positions 719–736 constitute a WH2 domain; the sequence is PAEDMLVAIRRGVRLRRT.

This sequence belongs to the MTSS family. In terms of assembly, interacts (via IMD domain) with RAC1; this interaction may be important to potentiate PDGF-induced RAC1 activation.

It localises to the cytoplasm. The protein resides in the cell projection. Its subcellular location is the ruffle. Its function is as follows. Involved in plasma membrane dynamics. Potentiated PDGF-mediated formation of membrane ruffles and lamellipodia in fibroblasts, acting via RAC1 activation. May function in actin bundling. This chain is Protein MTSS 2, found in Homo sapiens (Human).